The chain runs to 610 residues: tRNA uridine 5-carboxymethylaminomethyl modification enzyme MnmG (610 aa).

Residue 14–19 (GAGHAG) participates in FAD binding. 274 to 288 (GPRYCPSIEDKIVKF) is an NAD(+) binding site.

This sequence belongs to the MnmG family. As to quaternary structure, homodimer. Heterotetramer of two MnmE and two MnmG subunits. Requires FAD as cofactor.

The protein resides in the cytoplasm. Its function is as follows. NAD-binding protein involved in the addition of a carboxymethylaminomethyl (cmnm) group at the wobble position (U34) of certain tRNAs, forming tRNA-cmnm(5)s(2)U34. The sequence is that of tRNA uridine 5-carboxymethylaminomethyl modification enzyme MnmG from Chlamydia muridarum (strain MoPn / Nigg).